We begin with the raw amino-acid sequence, 92 residues long: MALVRSIFSAKKILGGSLARTSKAPKGFLAVYVGENQEKKQRYFVPVSYLKQPSFQALLSKCEEEFGFDHPMGGLTICCPEYTFISITSRIQ.

It belongs to the ARG7 family. Higher expression in thermo-responsive cultivars (e.g. cv. Alst-1, cv. Ang-0 and cv. Com-0) than in low thermo-responsive cultivars (e.g. cv. Dja-1, cv. El-0 and cv. Kon).

The protein localises to the cell membrane. Functions as a positive effector of cell expansion through modulation of auxin transport. Involved in thermo-responsiveness of plant architecture. Enhances plasma membrane H(+)-ATPase. This is Auxin-responsive protein SAUR28 from Arabidopsis thaliana (Mouse-ear cress).